A 607-amino-acid chain; its full sequence is Replication protein E1 (607 aa).

Residues 81–83 carry the Nuclear localization signal motif; that stretch reads KRK. Residues Ser87 and Ser95 each carry the phosphoserine; by host modification. Positions 94–103 match the Nuclear export signal motif; the sequence is LSPRLQSLNL. The interval 147–310 is DNA-binding region; that stretch reads QGGVGLGHIE…TMIQHQTADS (164 aa). An SF3 helicase domain is found at 409-559; the sequence is LNFIVFLDKF…FPFDSDDKPL (151 aa). Residue 435-442 coordinates ATP; that stretch reads GPPDTGKS. Lys516 participates in a covalent cross-link: Glycyl lysine isopeptide (Lys-Gly) (interchain with G-Cter in SUMO). A disordered region spans residues 583–607; it reads QEDEGEDGSTQRTFQCTTRQVNGPV. Residues 590 to 607 are compositionally biased toward polar residues; sequence GSTQRTFQCTTRQVNGPV.

It belongs to the papillomaviridae E1 protein family. As to quaternary structure, can form hexamers. Interacts with E2 protein; this interaction increases E1 DNA binding specificity. Interacts with host DNA polymerase subunit POLA2. Interacts with host single stranded DNA-binding protein RPA1. Interacts with host TOP1; this interaction stimulates the enzymatic activity of TOP1. Phosphorylated. Post-translationally, sumoylated.

It localises to the host nucleus. The catalysed reaction is Couples ATP hydrolysis with the unwinding of duplex DNA by translocating in the 3'-5' direction.. It carries out the reaction ATP + H2O = ADP + phosphate + H(+). In terms of biological role, ATP-dependent DNA 3'-5' helicase required for initiation of viral DNA replication. It forms a complex with the viral E2 protein. The E1-E2 complex binds to the replication origin which contains binding sites for both proteins. During the initial step, a dimer of E1 interacts with a dimer of protein E2 leading to a complex that binds the viral origin of replication with high specificity. Then, a second dimer of E1 displaces the E2 dimer in an ATP-dependent manner to form the E1 tetramer. Following this, two E1 monomers are added to each half of the site, which results in the formation of two E1 trimers on the viral ori. Subsequently, two hexamers will be created. The double hexamer acts as a bi-directional helicase machinery and unwinds the viral DNA and then recruits the host DNA polymerase to start replication. The polypeptide is Replication protein E1 (Human papillomavirus 23).